Reading from the N-terminus, the 235-residue chain is Segregation and condensation protein A (235 aa).

It belongs to the ScpA family. Component of a cohesin-like complex composed of ScpA, ScpB and the Smc homodimer, in which ScpA and ScpB bind to the head domain of Smc. The presence of the three proteins is required for the association of the complex with DNA.

The protein resides in the cytoplasm. Participates in chromosomal partition during cell division. May act via the formation of a condensin-like complex containing Smc and ScpB that pull DNA away from mid-cell into both cell halves. This is Segregation and condensation protein A from Streptococcus equi subsp. equi (strain 4047).